We begin with the raw amino-acid sequence, 690 residues long: Heterogeneous nuclear ribonucleoprotein M (690 aa).

The segment covering 1–13 (MAAGVEAAAEVAA) has biased composition (low complexity). Positions 1-63 (MAAGVEAAAE…KRGGNRFEPY (63 aa)) are disordered. Ala2 is modified (N-acetylalanine). Residue Lys17 forms a Glycyl lysine isopeptide (Lys-Gly) (interchain with G-Cter in SUMO2) linkage. At Ser29 the chain carries Phosphoserine. Glycyl lysine isopeptide (Lys-Gly) (interchain with G-Cter in SUMO2) cross-links involve residues Lys37, Lys68, and Lys82. Residues 37–49 (KGEERPTQNEKRK) show a composition bias toward basic and acidic residues. 2 consecutive RRM domains span residues 70–148 (YRAF…EDPD) and 164–241 (STVF…MDER). Position 85 is a phosphoserine (Ser85). Glycyl lysine isopeptide (Lys-Gly) (interchain with G-Cter in SUMO2) cross-links involve residues Lys87 and Lys126. N6-acetyllysine; alternate is present on Lys133. Lys133 is covalently cross-linked (Glycyl lysine isopeptide (Lys-Gly) (interchain with G-Cter in SUMO2); alternate). Residues Lys142 and Lys144 each participate in a glycyl lysine isopeptide (Lys-Gly) (interchain with G-Cter in SUMO2) cross-link. Ser164 carries the phosphoserine modification. Lys181 participates in a covalent cross-link: Glycyl lysine isopeptide (Lys-Gly) (interchain with G-Cter in SUMO2). An N6-acetyllysine; alternate modification is found at Lys237. Lys237 participates in a covalent cross-link: Glycyl lysine isopeptide (Lys-Gly) (interchain with G-Cter in SUMO2); alternate. Residues Lys245 and Lys305 each participate in a glycyl lysine isopeptide (Lys-Gly) (interchain with G-Cter in SUMO2) cross-link. Phosphoserine occurs at positions 325 and 337. Glycyl lysine isopeptide (Lys-Gly) (interchain with G-Cter in SUMO2) cross-links involve residues Lys341 and Lys348. Ser357 is subject to Phosphoserine. Repeat copies occupy residues 360 to 365 (GIERMG), 367 to 372 (GIDRIS), 375 to 380 (GMERMG), and 386 to 391 (GMDRVG). The 27 X 6 AA repeats of [GEVSTPAN]-[ILMV]-[DE]-[RH]-[MLVI]-[GAV] stretch occupies residues 360 to 568 (GIERMGPGID…ALGAGIERMG (209 aa)). A Phosphoserine modification is found at Ser392. 3 tandem repeats follow at residues 393–398 (EIERMG), 400–405 (VMDRMG), and 406–411 (SVERMG). Ser412 is modified (phosphoserine). 4 consecutive repeat copies span residues 413 to 418 (GIERMG), 421 to 426 (GLDHMA), 428 to 433 (SIERMG), and 435 to 440 (TMERIG). Ser428 carries the phosphoserine modification. At Ser441 the chain carries Phosphoserine. A run of 16 repeats spans residues 442–447 (GVERMG), 453–458 (GLERMA), 460–465 (PIDRVG), 467–472 (TIERMG), 474–479 (GVERMG), 481–486 (AIERMG), 488–493 (SMDRMV), 500–505 (GLERMG), 507–512 (VMDRMA), 514–519 (GLERMG), 522–527 (NLERMG), 528–532 (LERMG), 535–540 (SLERMG), 541–545 (LERMG), 548–553 (SLERMG), and 563–568 (GIERMG). Arg456 carries the omega-N-methylarginine modification. Phosphoserine is present on Ser488. Position 535 is a phosphoserine (Ser535). Ser548 is subject to Phosphoserine. Phosphoserine occurs at positions 578, 593, and 597. Lys611 is covalently cross-linked (Glycyl lysine isopeptide (Lys-Gly) (interchain with G-Cter in SUMO2)). One can recognise an RRM 3 domain in the interval 613–689 (CQIFVRNLPF…REIDVRIDRN (77 aa)). At Thr625 the chain carries Phosphothreonine. Residue Lys627 forms a Glycyl lysine isopeptide (Lys-Gly) (interchain with G-Cter in SUMO2) linkage. Lys632 bears the N6-acetyllysine mark. Glycyl lysine isopeptide (Lys-Gly) (interchain with G-Cter in SUMO2) cross-links involve residues Lys645 and Lys652. Lys658 carries the post-translational modification N6-acetyllysine; alternate. Residue Lys658 forms a Glycyl lysine isopeptide (Lys-Gly) (interchain with G-Cter in SUMO2); alternate linkage. A Glycyl lysine isopeptide (Lys-Gly) (interchain with G-Cter in SUMO1); alternate cross-link involves residue Lys658. Ser661 is modified (phosphoserine). Lys676 participates in a covalent cross-link: Glycyl lysine isopeptide (Lys-Gly) (interchain with G-Cter in SUMO2).

As to quaternary structure, identified in the spliceosome C complex. Interacts with PPIA/CYPA. Sumoylated. In terms of tissue distribution, expressed in all tissues tested, including liver, heart, lung, skeletal muscle, kidney, stomach, large intestine, small intestine, pancreas, spleen, peritoneal macrophage and thyroid.

The protein localises to the nucleus matrix. In terms of biological role, pre-mRNA binding protein, binds avidly to poly(G) and poly(U) RNA homopolymers. Involved in splicing. Acts as a receptor for carcinoembryonic antigen in Kupffer cells, may initiate a series of signaling events leading to tyrosine phosphorylation of proteins and induction of IL-1 alpha, IL-6, IL-10 and tumor necrosis factor alpha cytokines. The polypeptide is Heterogeneous nuclear ribonucleoprotein M (Hnrnpm) (Rattus norvegicus (Rat)).